A 203-amino-acid chain; its full sequence is Holliday junction branch migration complex subunit RuvA (203 aa).

The segment at 1–63 (MIGKLSGKID…EEHIHLYGFL (63 aa)) is domain I. Residues 64 to 142 (TLEEKNFFNL…KISSGSVIIK (79 aa)) form a domain II region. Positions 143–149 (DSLNIKN) are flexible linker. The domain III stretch occupies residues 150-203 (ITPVASNEVIKALVNLGFSRFEAQNAVQGIIIQNPEISIDELIKTALKNRNAGL).

Belongs to the RuvA family. As to quaternary structure, homotetramer. Forms an RuvA(8)-RuvB(12)-Holliday junction (HJ) complex. HJ DNA is sandwiched between 2 RuvA tetramers; dsDNA enters through RuvA and exits via RuvB. An RuvB hexamer assembles on each DNA strand where it exits the tetramer. Each RuvB hexamer is contacted by two RuvA subunits (via domain III) on 2 adjacent RuvB subunits; this complex drives branch migration. In the full resolvosome a probable DNA-RuvA(4)-RuvB(12)-RuvC(2) complex forms which resolves the HJ.

Its subcellular location is the cytoplasm. In terms of biological role, the RuvA-RuvB-RuvC complex processes Holliday junction (HJ) DNA during genetic recombination and DNA repair, while the RuvA-RuvB complex plays an important role in the rescue of blocked DNA replication forks via replication fork reversal (RFR). RuvA specifically binds to HJ cruciform DNA, conferring on it an open structure. The RuvB hexamer acts as an ATP-dependent pump, pulling dsDNA into and through the RuvAB complex. HJ branch migration allows RuvC to scan DNA until it finds its consensus sequence, where it cleaves and resolves the cruciform DNA. In Rickettsia felis (strain ATCC VR-1525 / URRWXCal2) (Rickettsia azadi), this protein is Holliday junction branch migration complex subunit RuvA.